We begin with the raw amino-acid sequence, 199 residues long: Peptidyl-tRNA hydrolase (199 aa).

Y18 provides a ligand contact to tRNA. The active-site Proton acceptor is the H23. TRNA-binding residues include Y72, N74, and N120.

It belongs to the PTH family. Monomer.

Its subcellular location is the cytoplasm. The catalysed reaction is an N-acyl-L-alpha-aminoacyl-tRNA + H2O = an N-acyl-L-amino acid + a tRNA + H(+). Hydrolyzes ribosome-free peptidyl-tRNAs (with 1 or more amino acids incorporated), which drop off the ribosome during protein synthesis, or as a result of ribosome stalling. Functionally, catalyzes the release of premature peptidyl moieties from peptidyl-tRNA molecules trapped in stalled 50S ribosomal subunits, and thus maintains levels of free tRNAs and 50S ribosomes. The chain is Peptidyl-tRNA hydrolase from Bifidobacterium longum (strain DJO10A).